A 368-amino-acid chain; its full sequence is tRNA-specific 2-thiouridylase MnmA (368 aa).

ATP contacts are provided by residues 6–13 (ALSGGVDS) and M32. The active-site Nucleophile is C92. C92 and C186 form a disulfide bridge. G116 is an ATP binding site. The interval 134–136 (KDQ) is interaction with tRNA. The active-site Cysteine persulfide intermediate is the C186. An interaction with tRNA region spans residues 292-293 (RY).

It belongs to the MnmA/TRMU family.

Its subcellular location is the cytoplasm. It catalyses the reaction S-sulfanyl-L-cysteinyl-[protein] + uridine(34) in tRNA + AH2 + ATP = 2-thiouridine(34) in tRNA + L-cysteinyl-[protein] + A + AMP + diphosphate + H(+). Its function is as follows. Catalyzes the 2-thiolation of uridine at the wobble position (U34) of tRNA, leading to the formation of s(2)U34. This is tRNA-specific 2-thiouridylase MnmA from Campylobacter hominis (strain ATCC BAA-381 / DSM 21671 / CCUG 45161 / LMG 19568 / NCTC 13146 / CH001A).